A 1394-amino-acid polypeptide reads, in one-letter code: MKDIFNFFEKPKDPLSFSAIRISLASPDKIRQWSHGEVKKPETINYRTFKPERDGLFCAKIFGPVKDYECNCGKYKRMKHRGVVCEKCGVEVIQSKVRRERLGHITLATPVAHIWFLKSLPSRIGNLLDITLKDLEKVLYCESYIVIDPKETTFQRGELLSEDRYQKALDEFGDDAFSAGMGGEAVLGLLRGVGPASKEHGEGIPGLANELRAEMKEATSDAKRKKIAKRLKVVEAFVASGNKPEWMMLEVIPVIPPDLRPLVPLDGGRFATSDLNDLYRRVINRNNRLKRLQELNAPDIIIRNEKRMLQEAVDALFDNGRRGKTITGPNKRPLKSLSDMLKGKQGRFRQNLLGKRVDYSGRSVIVVGPELKLHQCGLPKIMALELFKPFIYNKLEEKGYVTTIKSAKKMVEKERPEVWDILDEVIREHPVLLNRAPTLHRLGIQAFEPVLIEGKAIQLHPLVCTAFNADFDGDQMAVHVPLSIEAQMEARVLMMSTNNILSPAHGKPIIVPSQDIVLGIYYMTRERAFARGEGKVFASPEEVRAAYDQGEVDLQAKVWVRMDGKRVETTVGRVLLYDIVPRRLSFESINKVMDKKQLQGLIDLTYRLCGEKETVLLADRVRSMGYGNATRAGISIALDNMVIPRKKVDLLERATREVDDIQAQYTEGLITIGERYNKVIDIWAQVTEEVAQEMMGEIGTETAVGTGKDGKREERRQPSFNPIYIMADSGARGSAQQIRQLAGMRGLMAKPSGEIIETPITANFREGLNVLQYFISTHGARKGLADTALKTANSGYLTRRLVDVAQDAIITEYDCGAMDGITLGALVEGGEIIEPMGERILGRVALDDMLDPFSGNVLVKANEEIDEGKVKLIENAGIDKVKIRSVLTCQARRGICVECYGRDLARGRKVNIGEAVGVIAAQSIGEPGTQLTMRTFHIGGAASRRAEQSTIENRNAGLIKFNNVSVAKKRDGTLIVMNRNGEIIVTDDQGRERERYGVVYGAKLLVREGQKVEANQLLAEWDPYSMPIITEVAGRVKYGDLVDGVTISEQVDEITGLARKAVIASKDPDARPRISIKDEEGRTKKLANSDADARYMLPEGANLVVNDGDEVDAGDVIAKMPRETTKTKDITGGLPRVAELFEARKPKEHAVISEIDGVVAFGKDTKGKRKVVITPEVDSKLRPDLAKEYLIGKGKHISVHTGDRVRAGEALMDGAANPHDILRVLGEKELARWLVDEVQEVYRLQGVKINDKHIETIVRQMLRRVRIVDVGDTEFLADEQVEKFAFEEENERVLKAGGRAAQGEPLLLGITKASLSTESFISASSFQETTKVLTEAAISGKVDYLRGLKENVIMGRLVPAGTGLGAYKHLDIEVETPVDAVEEAEEALAVGAEE.

Residues Cys70, Cys72, Cys85, and Cys88 each contribute to the Zn(2+) site. Residues Asp470, Asp472, and Asp474 each contribute to the Mg(2+) site. 4 residues coordinate Zn(2+): Cys815, Cys889, Cys896, and Cys899.

The protein belongs to the RNA polymerase beta' chain family. In terms of assembly, the RNAP catalytic core consists of 2 alpha, 1 beta, 1 beta' and 1 omega subunit. When a sigma factor is associated with the core the holoenzyme is formed, which can initiate transcription. Mg(2+) serves as cofactor. Requires Zn(2+) as cofactor.

It carries out the reaction RNA(n) + a ribonucleoside 5'-triphosphate = RNA(n+1) + diphosphate. Its function is as follows. DNA-dependent RNA polymerase catalyzes the transcription of DNA into RNA using the four ribonucleoside triphosphates as substrates. In Anaeromyxobacter sp. (strain K), this protein is DNA-directed RNA polymerase subunit beta'.